Reading from the N-terminus, the 136-residue chain is MQPKKTKFRKAHKGRIHGVASSGATLAFGQYGLKATEPERVTARQIEAARRALTRHMKRAGRVWIRVFPDLPVSKKPAEVRMGSGKGSPELWVARVKPGRVLFEIDGVNTQTAREALTLAAAKLPIKTRFVERIAE.

This sequence belongs to the universal ribosomal protein uL16 family. Part of the 50S ribosomal subunit.

Functionally, binds 23S rRNA and is also seen to make contacts with the A and possibly P site tRNAs. The protein is Large ribosomal subunit protein uL16 of Bradyrhizobium diazoefficiens (strain JCM 10833 / BCRC 13528 / IAM 13628 / NBRC 14792 / USDA 110).